The primary structure comprises 315 residues: Large ribosomal subunit protein uL29m (315 aa).

The protein belongs to the universal ribosomal protein uL29 family. In terms of assembly, component of the mitochondrial large ribosomal subunit. Mature mitochondrial ribosomes consist of a small (37S) and a large (54S) subunit. The 37S subunit contains at least 33 different proteins and 1 molecule of RNA (15S). The 54S subunit contains at least 45 different proteins and 1 molecule of RNA (21S).

Its subcellular location is the mitochondrion. The chain is Large ribosomal subunit protein uL29m (MRPL4) from Candida glabrata (strain ATCC 2001 / BCRC 20586 / JCM 3761 / NBRC 0622 / NRRL Y-65 / CBS 138) (Yeast).